The following is a 170-amino-acid chain: Adenine phosphoribosyltransferase (170 aa).

It belongs to the purine/pyrimidine phosphoribosyltransferase family. As to quaternary structure, homodimer.

Its subcellular location is the cytoplasm. It catalyses the reaction AMP + diphosphate = 5-phospho-alpha-D-ribose 1-diphosphate + adenine. The protein operates within purine metabolism; AMP biosynthesis via salvage pathway; AMP from adenine: step 1/1. Catalyzes a salvage reaction resulting in the formation of AMP, that is energically less costly than de novo synthesis. The protein is Adenine phosphoribosyltransferase of Maridesulfovibrio salexigens (strain ATCC 14822 / DSM 2638 / NCIMB 8403 / VKM B-1763) (Desulfovibrio salexigens).